A 147-amino-acid polypeptide reads, in one-letter code: Hemoglobin subunit beta (147 aa).

Val2 carries the N-acetylvaline modification. The region spanning 3–147 (HLSGDEKNAV…VANALAHRYH (145 aa)) is the Globin domain. Residue Ser45 is modified to Phosphoserine. Lys60 is modified (N6-acetyllysine). His64 contacts heme b. Lys83 bears the N6-acetyllysine mark. His93 serves as a coordination point for heme b. Cys94 bears the S-nitrosocysteine mark.

This sequence belongs to the globin family. In terms of assembly, heterotetramer of two alpha chains and two beta chains. Red blood cells.

Its function is as follows. Involved in oxygen transport from the lung to the various peripheral tissues. This chain is Hemoglobin subunit beta (HBB), found in Camelus dromedarius (Dromedary).